The sequence spans 178 residues: Large ribosomal subunit protein eL20 (178 aa).

Belongs to the eukaryotic ribosomal protein eL20 family.

This Oryza sativa subsp. japonica (Rice) protein is Large ribosomal subunit protein eL20 (RPL18A).